A 186-amino-acid polypeptide reads, in one-letter code: Potassium-transporting ATPase KdpC subunit (186 aa).

Residues 9-29 traverse the membrane as a helical segment; it reads AAVVLFGGCLLVLGLLYPLAM.

This sequence belongs to the KdpC family. As to quaternary structure, the system is composed of three essential subunits: KdpA, KdpB and KdpC.

The protein resides in the cell membrane. Its function is as follows. Part of the high-affinity ATP-driven potassium transport (or Kdp) system, which catalyzes the hydrolysis of ATP coupled with the electrogenic transport of potassium into the cytoplasm. This subunit acts as a catalytic chaperone that increases the ATP-binding affinity of the ATP-hydrolyzing subunit KdpB by the formation of a transient KdpB/KdpC/ATP ternary complex. The polypeptide is Potassium-transporting ATPase KdpC subunit (Methanosphaerula palustris (strain ATCC BAA-1556 / DSM 19958 / E1-9c)).